A 67-amino-acid polypeptide reads, in one-letter code: Putative sodium channel alpha-toxin Acra5 (67 aa).

Residues 2–65 (RDGYIMIKDT…VYGDRGVICR (64 aa)) enclose the LCN-type CS-alpha/beta domain. 4 cysteine pairs are disulfide-bonded: C13-C64, C17-C40, C26-C45, and C30-C47. A propeptide (removed by a carboxypeptidase) is located at residue R67.

Belongs to the long (4 C-C) scorpion toxin superfamily. Sodium channel inhibitor family. Alpha subfamily. As to expression, expressed by the venom gland.

Its subcellular location is the secreted. Functionally, alpha toxins bind voltage-independently at site-3 of sodium channels (Nav) and inhibit the inactivation of the activated channels, thereby blocking neuronal transmission. This chain is Putative sodium channel alpha-toxin Acra5, found in Androctonus crassicauda (Arabian fat-tailed scorpion).